Consider the following 383-residue polypeptide: Homeobox protein SHOOT MERISTEMLESS (383 aa).

The interval 37–58 (HQQHHGHDQQHQHQQQHDGYAY) is disordered. Positions 263–283 (ELKGQLLRKYSGYLGSLKQEF) constitute an ELK domain. Residues 284–347 (MKKRKKGKLP…NQRKRHWKPS (64 aa)) constitute a DNA-binding region (homeobox; TALE-type).

The protein belongs to the TALE/KNOX homeobox family.

The protein resides in the nucleus. In terms of biological role, required for shoot apical meristem formation during embryogenesis. Probably binds to the DNA sequence 5'-TGAC-3'. This is Homeobox protein SHOOT MERISTEMLESS (STM) from Brassica oleracea (Wild cabbage).